The following is a 265-amino-acid chain: Transcriptional activator AggR (265 aa).

Positions 164-261 constitute an HTH araC/xylS-type domain; sequence DKVRNTIEKD…GITPKQFLTY (98 aa). DNA-binding regions (H-T-H motif) lie at residues 181–202 and 228–251; these read AIIA…ESEY and ISQI…VKHF.

In terms of assembly, homodimer.

Transcriptional activator of aggregative adherence fimbria I expression in enteroaggregative E.coli. The chain is Transcriptional activator AggR (aggR) from Escherichia coli.